The chain runs to 290 residues: MKRVGAHVSIAGGVENAPLQASKIGAKAFALFTKNQRQWKSPELAALSIETFRRNCCDGGFRPEHILPHDSYLINLGSPEPDKLDRSRNAFFDEMQRVERLGLKMLNFHPGSHLNQIEPDACLQLIAESVNMALDRSCCVTAVIENTAGQGTNLGRSFDDLACIIDHVEDKSRVGVCLDTCHLFAGGYDIRTKEALDRTLDEFDRIVGIRYLKAMHLNDAKQPLGSRLDRHECIGKGAIGIEAFTAIMQHPLLDELPLILETPDSDGWQEEIGLLYRLAEEQVKDVSTPP.

Zn(2+) is bound by residues His69, His109, Glu145, Asp179, His182, His216, Asp229, His231, and Glu261.

This sequence belongs to the AP endonuclease 2 family. Requires Zn(2+) as cofactor.

It carries out the reaction Endonucleolytic cleavage to 5'-phosphooligonucleotide end-products.. Its function is as follows. Endonuclease IV plays a role in DNA repair. It cleaves phosphodiester bonds at apurinic or apyrimidinic (AP) sites, generating a 3'-hydroxyl group and a 5'-terminal sugar phosphate. In Chlorobium limicola (strain DSM 245 / NBRC 103803 / 6330), this protein is Probable endonuclease 4.